Reading from the N-terminus, the 66-residue chain is Large ribosomal subunit protein bL33B (66 aa).

Belongs to the bacterial ribosomal protein bL33 family.

The chain is Large ribosomal subunit protein bL33B from Synechococcus sp. (strain CC9605).